The sequence spans 306 residues: Lipoyl synthase (306 aa).

[4Fe-4S] cluster-binding residues include cysteine 41, cysteine 46, cysteine 52, cysteine 68, cysteine 72, cysteine 75, and serine 281. Residues 54–270 enclose the Radical SAM core domain; sequence GARRTATFMI…RKVAMDKGFK (217 aa). The tract at residues 283 to 306 is disordered; it reads HADEQVNEAAKEKHRLGEEKLQQN.

It belongs to the radical SAM superfamily. Lipoyl synthase family. [4Fe-4S] cluster is required as a cofactor.

The protein resides in the cytoplasm. It catalyses the reaction [[Fe-S] cluster scaffold protein carrying a second [4Fe-4S](2+) cluster] + N(6)-octanoyl-L-lysyl-[protein] + 2 oxidized [2Fe-2S]-[ferredoxin] + 2 S-adenosyl-L-methionine + 4 H(+) = [[Fe-S] cluster scaffold protein] + N(6)-[(R)-dihydrolipoyl]-L-lysyl-[protein] + 4 Fe(3+) + 2 hydrogen sulfide + 2 5'-deoxyadenosine + 2 L-methionine + 2 reduced [2Fe-2S]-[ferredoxin]. Its pathway is protein modification; protein lipoylation via endogenous pathway; protein N(6)-(lipoyl)lysine from octanoyl-[acyl-carrier-protein]. Catalyzes the radical-mediated insertion of two sulfur atoms into the C-6 and C-8 positions of the octanoyl moiety bound to the lipoyl domains of lipoate-dependent enzymes, thereby converting the octanoylated domains into lipoylated derivatives. This chain is Lipoyl synthase, found in Staphylococcus haemolyticus (strain JCSC1435).